Reading from the N-terminus, the 188-residue chain is Probable manganese efflux pump MntP (188 aa).

The next 5 membrane-spanning stretches (helical) occupy residues I3 to G23, L66 to I86, W106 to F128, A143 to G163, and I168 to G188.

Belongs to the MntP (TC 9.B.29) family.

Its subcellular location is the cell inner membrane. Functionally, probably functions as a manganese efflux pump. This chain is Probable manganese efflux pump MntP, found in Shigella sonnei (strain Ss046).